We begin with the raw amino-acid sequence, 624 residues long: RQC trigger complex subunit CUE3 (624 aa).

Positions 316–359 (VNEEQLSALMELFPQFSKYQLSQTLLAYDNNIELVTNKIFEDPT) constitute a CUE domain. Disordered stretches follow at residues 366–390 (REPA…ELSI), 435–469 (RDDT…DDSN), and 546–624 (SKTG…NNAI). Residue Ser377 is modified to Phosphoserine. Composition is skewed to basic and acidic residues over residues 443–455 (DVNR…RIGL) and 568–589 (EQAK…TEQK). Basic residues predominate over residues 590 to 617 (KRQHAKNEKRKGARANHNRKKGHDKKLA).

In terms of assembly, component of the RQT (ribosome quality control trigger) complex, composed of SLH1, CUE3, and RQT4. Interacts with ubiquitin; the interaction is direct. Interacts with SLH1. Interacts with RQT4. Interacts with HEL2. Associates with translating ribosomes.

It localises to the cytoplasm. Functionally, involved in activation of the ribosome quality control (RQC) pathway, a pathway that degrades nascent peptide chains during problematic translation. Specifically recognizes and binds RPS20/uS10 ubiquitinated by HEL2, promoting recruitment of the RQT (ribosome quality control trigger) complex on stalled ribosomes, followed by disassembly of stalled ribosomes. In Saccharomyces cerevisiae (strain ATCC 204508 / S288c) (Baker's yeast), this protein is RQC trigger complex subunit CUE3 (CUE3).